Consider the following 831-residue polypeptide: Heat shock 70 kDa protein 15 (831 aa).

2 disordered regions span residues 502–579 (EEEV…KKKV) and 784–831 (IMTK…EGST). Positions 512–526 (DQSEETAKMDTDKAS) are enriched in basic and acidic residues. 2 positions are modified to phosphoserine: Ser-533 and Ser-536. The span at 787–800 (KPKPAAKAEAPQAK) shows a compositional bias: low complexity.

This sequence belongs to the heat shock protein 70 (TC 1.A.33) family. HSP110/SSE subfamily.

The protein localises to the cytoplasm. It is found in the nucleus. Its function is as follows. In cooperation with other chaperones, Hsp70s are key components that facilitate folding of de novo synthesized proteins, assist translocation of precursor proteins into organelles, and are responsible for degradation of damaged protein under stress conditions. The chain is Heat shock 70 kDa protein 15 (HSP70-15) from Arabidopsis thaliana (Mouse-ear cress).